The chain runs to 720 residues: IKIVVERDPIKTSFEKWAKPGHFSKTLAKGPNTTTWIWNLHADAHDFDSHTNDLEEISRKVFSAHFGQLAIIFIWLSGMYFHGARFSNYEAWLGDPTHIKPSAQVVWPIVGQEILNGDVGGGFRGIQITSGFFQIWRASGITSELQLYCTAIGALIFAALMLFAGWFHYHKAAPKLAWFQDVESMLNHHLAGLLGLGSLSWAGHQIHVSLPINELLDAGVDPKEIPLPHEFILNRELLAQLYPSFAKGLTPFFTLNWSEYSEFLTFRGGLNPVTGGLWLTDTAHHHLAIAILFLIAGHMYRTNWSIGHNLKEILEAHKGPFTGEGHRGLYEILTTSWHAQLALNLAMLGSLTIVVAHHMYSMPPYPYLATDYGTQLSLFTHHMWIGGFLIVGAAAHAAIFMVRDYDPTTQYNNLLDRVLRHRDAIVSHLNWACIFLGFHSFGLYIHNDTMSALGRPKDMFSDTAIQLQPIFAQWIQNTHALAPSLTAPDATASTSLTWGGGDLVAVGAKVALLPIPLGTADFLVHHIHAFTIHVTVLILLKGVLFARSSRLIPDKVNLGFRFPCDGPGRGGTCQVSAWDHVFLGLFWMYNAISVVIFHFSWKMQSDVWGSISDQGVVTHITGGNFAQSSITINGWLRDFLWAQASQVIQSYGSSLSAYGLLFLGAHFVWAFSLMFLFSGRGYWQELIESIVWAHNKLKVAPAIQPRALSIVQGRAVGVAH.

The next 8 membrane-spanning stretches (helical) occupy residues 61–84 (VFSA…FHGA), 147–170 (LYCT…FHYH), 186–210 (LNHH…HVSL), 282–300 (TAHH…GHMY), 337–360 (WHAQ…HHMY), 376–402 (LSLF…IFMV), 424–446 (AIVS…LYIH), and 522–540 (FLVH…LILL). Cys564 and Cys573 together coordinate [4Fe-4S] cluster. 2 consecutive transmembrane segments (helical) span residues 580-601 (HVFL…HFSW) and 655-677 (LSAY…MFLF). Chlorophyll a' is bound at residue His666. Chlorophyll a-binding residues include Met674 and Tyr682. Trp683 contacts phylloquinone. A helical transmembrane segment spans residues 715–720 (AVGVAH).

This sequence belongs to the PsaA/PsaB family. The PsaA/B heterodimer binds the P700 chlorophyll special pair and subsequent electron acceptors. PSI consists of a core antenna complex that captures photons, and an electron transfer chain that converts photonic excitation into a charge separation. The eukaryotic PSI reaction center is composed of at least 11 subunits. P700 is a chlorophyll a/chlorophyll a' dimer, A0 is one or more chlorophyll a, A1 is one or both phylloquinones and FX is a shared 4Fe-4S iron-sulfur center. is required as a cofactor.

It is found in the plastid. The protein localises to the chloroplast thylakoid membrane. The catalysed reaction is reduced [plastocyanin] + hnu + oxidized [2Fe-2S]-[ferredoxin] = oxidized [plastocyanin] + reduced [2Fe-2S]-[ferredoxin]. In terms of biological role, psaA and PsaB bind P700, the primary electron donor of photosystem I (PSI), as well as the electron acceptors A0, A1 and FX. PSI is a plastocyanin-ferredoxin oxidoreductase, converting photonic excitation into a charge separation, which transfers an electron from the donor P700 chlorophyll pair to the spectroscopically characterized acceptors A0, A1, FX, FA and FB in turn. Oxidized P700 is reduced on the lumenal side of the thylakoid membrane by plastocyanin. The chain is Photosystem I P700 chlorophyll a apoprotein A1 from Sequoia sempervirens (California redwood).